The following is a 350-amino-acid chain: Ion-translocating oxidoreductase complex subunit D (350 aa).

3 consecutive transmembrane segments (helical) span residues 25–45 (ILCALPGVAVQCFFFGWGTVI), 89–109 (IPPLAPWWVTVIGTLFAIVIV), and 129–149 (VMLLISFPVQMTSWVAPSVIA). FMN phosphoryl threonine is present on T185. A run of 5 helical transmembrane segments spans residues 212-232 (GFGVGWFWVNLAYLAGGLVML), 239-259 (WHITAGILAALFICSGVGYLL), 264-284 (FTGPLLHLFSGATMLAAFFIA), 298-318 (LVFGALIGILVYIIRTFGGYP), and 319-339 (DAFAFAILLANLCAPFIDHYM).

Belongs to the NqrB/RnfD family. As to quaternary structure, the complex is composed of six subunits: RnfA, RnfB, RnfC, RnfD, RnfE and RnfG. The cofactor is FMN.

The protein resides in the cell inner membrane. In terms of biological role, part of a membrane-bound complex that couples electron transfer with translocation of ions across the membrane. The polypeptide is Ion-translocating oxidoreductase complex subunit D (Shewanella sediminis (strain HAW-EB3)).